A 205-amino-acid chain; its full sequence is Holliday junction branch migration complex subunit RuvA (205 aa).

The segment at 1–68 (MIGYLEGTLL…QPKPVLIGFN (68 aa)) is domain I. The interval 69 to 146 (TEEEKDFFHL…RFADAGHSSA (78 aa)) is domain II. Residues 147–151 (PDVPV) form a flexible linker region. Residues 152–205 (TGSLADQTVEVLVGQLGYKPNEARLMVAGALKRNPDVSTPEALFDEIFKHGQAQ) are domain III.

Belongs to the RuvA family. As to quaternary structure, homotetramer. Forms an RuvA(8)-RuvB(12)-Holliday junction (HJ) complex. HJ DNA is sandwiched between 2 RuvA tetramers; dsDNA enters through RuvA and exits via RuvB. An RuvB hexamer assembles on each DNA strand where it exits the tetramer. Each RuvB hexamer is contacted by two RuvA subunits (via domain III) on 2 adjacent RuvB subunits; this complex drives branch migration. In the full resolvosome a probable DNA-RuvA(4)-RuvB(12)-RuvC(2) complex forms which resolves the HJ.

Its subcellular location is the cytoplasm. In terms of biological role, the RuvA-RuvB-RuvC complex processes Holliday junction (HJ) DNA during genetic recombination and DNA repair, while the RuvA-RuvB complex plays an important role in the rescue of blocked DNA replication forks via replication fork reversal (RFR). RuvA specifically binds to HJ cruciform DNA, conferring on it an open structure. The RuvB hexamer acts as an ATP-dependent pump, pulling dsDNA into and through the RuvAB complex. HJ branch migration allows RuvC to scan DNA until it finds its consensus sequence, where it cleaves and resolves the cruciform DNA. The protein is Holliday junction branch migration complex subunit RuvA of Desulfosudis oleivorans (strain DSM 6200 / JCM 39069 / Hxd3) (Desulfococcus oleovorans).